We begin with the raw amino-acid sequence, 229 residues long: Potassium/proton antiporter CemA (229 aa).

3 consecutive transmembrane segments (helical) span residues 6 to 26 (AFIP…ISLC), 107 to 127 (ILHF…SFWG), and 189 to 209 (ILSG…KYWI).

The protein belongs to the CemA family.

Its subcellular location is the plastid. It is found in the chloroplast inner membrane. The catalysed reaction is K(+)(in) + H(+)(out) = K(+)(out) + H(+)(in). Functionally, contributes to K(+)/H(+) antiport activity by supporting proton efflux to control proton extrusion and homeostasis in chloroplasts in a light-dependent manner to modulate photosynthesis. Prevents excessive induction of non-photochemical quenching (NPQ) under continuous-light conditions. Indirectly promotes efficient inorganic carbon uptake into chloroplasts. In Nasturtium officinale (Watercress), this protein is Potassium/proton antiporter CemA.